Here is a 295-residue protein sequence, read N- to C-terminus: MEFRQLRYFVAAAEEGNVGAAARRLHISQPPVTRQIHALEQHLGVLLFERSARGVQLTPAGAAFLEDARRMLELGRTSVDRSRAASRGEIGQLDIGYLGTAIYQTVPALLHAFTQAVPGATLSLALMPKVRQIEALRAGTIHLGVGRFYPQEPGITVEHLHYERLYIAAGSSIARQLRQDPTLLRLKSESLVLFPKEGRPSFADEVIALMRRAGVEPRVTAIVEDVNAALGLVAAGAGVTLVPASVAAIRRPFVRTMEMADASAKVPVSLTYLTDSRVPVLRAFLDVARRGKGQK.

The region spanning 1-58 (MEFRQLRYFVAAAEEGNVGAAARRLHISQPPVTRQIHALEQHLGVLLFERSARGVQLT) is the HTH lysR-type domain. A DNA-binding region (H-T-H motif) is located at residues 18-37 (VGAAARRLHISQPPVTRQIH).

This sequence belongs to the LysR transcriptional regulatory family.

It is found in the cytoplasm. Involved in the regulation of 3-chlorocatechol degradation. Transcriptional regulator of tfdB expression. Acts as a repressor in the absence of its effector (either 2-cis-chlorodiene lactone or chloromaleylacetate) but acts as an activator when its effector is present. In Cupriavidus pinatubonensis (strain JMP 134 / LMG 1197) (Cupriavidus necator (strain JMP 134)), this protein is HTH-type transcriptional regulator TfdS (tfdS).